Consider the following 80-residue polypeptide: Exodeoxyribonuclease 7 small subunit (80 aa).

The protein belongs to the XseB family. Heterooligomer composed of large and small subunits.

The protein resides in the cytoplasm. The enzyme catalyses Exonucleolytic cleavage in either 5'- to 3'- or 3'- to 5'-direction to yield nucleoside 5'-phosphates.. In terms of biological role, bidirectionally degrades single-stranded DNA into large acid-insoluble oligonucleotides, which are then degraded further into small acid-soluble oligonucleotides. The protein is Exodeoxyribonuclease 7 small subunit of Pseudoalteromonas translucida (strain TAC 125).